Here is a 105-residue protein sequence, read N- to C-terminus: Phosphoribosyl-AMP cyclohydrolase (105 aa).

Residue D72 participates in Mg(2+) binding. C73 provides a ligand contact to Zn(2+). 2 residues coordinate Mg(2+): D74 and D76. Positions 89 and 96 each coordinate Zn(2+).

The protein belongs to the PRA-CH family. In terms of assembly, homodimer. Mg(2+) serves as cofactor. It depends on Zn(2+) as a cofactor.

Its subcellular location is the cytoplasm. The catalysed reaction is 1-(5-phospho-beta-D-ribosyl)-5'-AMP + H2O = 1-(5-phospho-beta-D-ribosyl)-5-[(5-phospho-beta-D-ribosylamino)methylideneamino]imidazole-4-carboxamide. Its pathway is amino-acid biosynthesis; L-histidine biosynthesis; L-histidine from 5-phospho-alpha-D-ribose 1-diphosphate: step 3/9. Catalyzes the hydrolysis of the adenine ring of phosphoribosyl-AMP. In Listeria monocytogenes serovar 1/2a (strain ATCC BAA-679 / EGD-e), this protein is Phosphoribosyl-AMP cyclohydrolase.